We begin with the raw amino-acid sequence, 309 residues long: Ribosomal RNA small subunit methyltransferase H (309 aa).

S-adenosyl-L-methionine contacts are provided by residues Gly-33–His-35, Asp-53, Phe-79, Asp-100, and Gln-107.

Belongs to the methyltransferase superfamily. RsmH family.

It localises to the cytoplasm. The catalysed reaction is cytidine(1402) in 16S rRNA + S-adenosyl-L-methionine = N(4)-methylcytidine(1402) in 16S rRNA + S-adenosyl-L-homocysteine + H(+). Specifically methylates the N4 position of cytidine in position 1402 (C1402) of 16S rRNA. In Clostridium botulinum (strain ATCC 19397 / Type A), this protein is Ribosomal RNA small subunit methyltransferase H.